The sequence spans 395 residues: Crh-like protein 5 (395 aa).

Positions 1–19 (MYFKYTAAALAAVLPLCSA) are cleaved as a signal peptide. An intrachain disulfide couples cysteine 25 to cysteine 32. Residues 45–230 (ADFTSASALD…WAGGLTDYSA (186 aa)) enclose the GH16 domain. Glutamate 119 serves as the catalytic Nucleophile. Residue glutamate 123 is the Proton donor of the active site. Positions 123, 203, 207, and 218 each coordinate chitin. Positions 271–374 (ISSSSSVTSS…PELSQGAAGS (104 aa)) are disordered. Low complexity-rich tracts occupy residues 272-338 (SSSS…SNTG) and 348-364 (GSSS…ASAT). The N-linked (GlcNAc...) asparagine glycan is linked to asparagine 319. Residue glycine 370 is the site of GPI-like-anchor amidated glycine attachment. Residues 371–395 (AAGSIKGSVTACALVFGAVAAVLAF) constitute a propeptide, removed in mature form.

This sequence belongs to the glycosyl hydrolase 16 family. CRH1 subfamily. The GPI-like anchor contains a phosphoceramide lipid group. The anchor position has not been determined.

The protein localises to the cell membrane. The protein resides in the secreted. Its subcellular location is the cell wall. It catalyses the reaction Random endo-hydrolysis of N-acetyl-beta-D-glucosaminide (1-&gt;4)-beta-linkages in chitin and chitodextrins.. Dual chitinase/transglycosylase that plays a role in cell wall architecture. Chitinase and transglycosylase activities are coupled. Required for the polysaccharide cross-linking at the septa and the cell wall. More specifically, transfers chitin to 1,6-beta-glucan in the cell wall. Chr5 shows acceptor substrate promiscuity and is also able to cross-link chitin to chitin. The protein is Crh-like protein 5 of Aspergillus fumigatus (strain ATCC MYA-4609 / CBS 101355 / FGSC A1100 / Af293) (Neosartorya fumigata).